The sequence spans 136 residues: MTERTLVLIKPDGVQRQLVGEIIGRIERKGLTLVALELRHVSQDLAAQHYAEHEGKPFFASLLEFITSGPVVAAIVEGPRAIAAFRQLAGGTDPVEKAIPGTIRGDFGLETQFNLVHGSDSVESAKREIALWFPDA.

ATP contacts are provided by lysine 10, phenylalanine 58, arginine 86, threonine 92, arginine 104, and asparagine 114. The active-site Pros-phosphohistidine intermediate is histidine 117.

This sequence belongs to the NDK family. As to quaternary structure, homotetramer. Mg(2+) serves as cofactor.

It is found in the cytoplasm. The catalysed reaction is a 2'-deoxyribonucleoside 5'-diphosphate + ATP = a 2'-deoxyribonucleoside 5'-triphosphate + ADP. It carries out the reaction a ribonucleoside 5'-diphosphate + ATP = a ribonucleoside 5'-triphosphate + ADP. Its function is as follows. Major role in the synthesis of nucleoside triphosphates other than ATP. The ATP gamma phosphate is transferred to the NDP beta phosphate via a ping-pong mechanism, using a phosphorylated active-site intermediate. This Mycobacterium avium (strain 104) protein is Nucleoside diphosphate kinase.